Consider the following 152-residue polypeptide: Large ribosomal subunit protein uL13 (152 aa).

Belongs to the universal ribosomal protein uL13 family. In terms of assembly, part of the 50S ribosomal subunit.

This protein is one of the early assembly proteins of the 50S ribosomal subunit, although it is not seen to bind rRNA by itself. It is important during the early stages of 50S assembly. In Wolbachia sp. subsp. Drosophila simulans (strain wRi), this protein is Large ribosomal subunit protein uL13.